A 901-amino-acid chain; its full sequence is HTH-type transcriptional regulator MalT (901 aa).

39-46 is a binding site for ATP; the sequence is SPAGYGKT. The HTH luxR-type domain occupies 829–894; it reads ELIRTSPLTQ…AAVQHAQKLL (66 aa). The segment at residues 853–872 is a DNA-binding region (H-T-H motif); it reads NEQIAGELEVAATTIKTHIR.

This sequence belongs to the MalT family. Monomer in solution. Oligomerizes to an active state in the presence of the positive effectors ATP and maltotriose.

Its activity is regulated as follows. Activated by ATP and maltotriose, which are both required for DNA binding. Functionally, positively regulates the transcription of the maltose regulon whose gene products are responsible for uptake and catabolism of malto-oligosaccharides. Specifically binds to the promoter region of its target genes, recognizing a short DNA motif called the MalT box. The polypeptide is HTH-type transcriptional regulator MalT (Shigella boydii serotype 4 (strain Sb227)).